A 120-amino-acid chain; its full sequence is Chaperonin GroEL (120 aa).

23–27 (DGTTT) provides a ligand contact to ATP.

This sequence belongs to the chaperonin (HSP60) family. In terms of assembly, forms a cylinder of 14 subunits composed of two heptameric rings stacked back-to-back. Interacts with the co-chaperonin GroES.

It localises to the cytoplasm. The catalysed reaction is ATP + H2O + a folded polypeptide = ADP + phosphate + an unfolded polypeptide.. Its function is as follows. Together with its co-chaperonin GroES, plays an essential role in assisting protein folding. The GroEL-GroES system forms a nano-cage that allows encapsulation of the non-native substrate proteins and provides a physical environment optimized to promote and accelerate protein folding. This is Chaperonin GroEL from Mycolicibacterium rhodesiae (Mycobacterium rhodesiae).